The chain runs to 367 residues: 2-oxoisovalerate dehydrogenase subunit alpha (367 aa).

Substrate contacts are provided by residues Phe-66, Tyr-95, 128 to 131 (MPEH), and Ser-144. 94–96 (YYR) contacts thiamine diphosphate. Residues 144 to 146 (SPI), 174 to 180 (GDGATSE), 204 to 208 (NFYAI), and His-273 each bind thiamine diphosphate. 3 residues coordinate Mg(2+): Asp-175, Asn-204, and Tyr-206.

Belongs to the BCKDHA family. As to quaternary structure, heterotetramer of two alpha and two beta chains. Directly associated with ODBB in the E1 complex. Requires thiamine diphosphate as cofactor.

The enzyme catalyses N(6)-[(R)-lipoyl]-L-lysyl-[protein] + 3-methyl-2-oxobutanoate + H(+) = N(6)-[(R)-S(8)-2-methylpropanoyldihydrolipoyl]-L-lysyl-[protein] + CO2. Its function is as follows. The branched-chain alpha-keto dehydrogenase complex catalyzes the overall conversion of alpha-keto acids to acyl-CoA and CO(2). It contains multiple copies of three enzymatic components: branched-chain alpha-keto acid decarboxylase (E1), lipoamide acyltransferase (E2) and lipoamide dehydrogenase (E3). The protein is 2-oxoisovalerate dehydrogenase subunit alpha of Thermus thermophilus (strain ATCC BAA-163 / DSM 7039 / HB27).